The following is a 281-amino-acid chain: Deoxyribonuclease-1 (281 aa).

The signal sequence occupies residues 1 to 21 (MRSEMLTALLTLAVLLQVAGS). An N-linked (GlcNAc...) asparagine glycan is attached at N39. The active site involves E99. The cysteines at positions 122 and 125 are disulfide-linked. The active site involves H155.

The protein belongs to the DNase I family. It depends on Ca(2+) as a cofactor. The cofactor is Mg(2+). In terms of tissue distribution, equivalent levels in pancreas and parotid gland, low amounts in kidney, liver, small intestine, stomach and thymus.

The protein localises to the secreted. The protein resides in the zymogen granule. It is found in the nucleus envelope. The catalysed reaction is Endonucleolytic cleavage to 5'-phosphodinucleotide and 5'-phosphooligonucleotide end-products.. Serum endocuclease secreted into body fluids by a wide variety of exocrine and endocrine organs. Expressed by non-hematopoietic tissues and preferentially cleaves protein-free DNA. Among other functions, seems to be involved in cell death by apoptosis. Binds specifically to G-actin and blocks actin polymerization. Preferentially attacks double-stranded DNA and produces oligonucleotides with 5'-phospho and 3'-hydroxy termini. Together with DNASE1L3, plays a key role in degrading neutrophil extracellular traps (NETs). NETs are mainly composed of DNA fibers and are released by neutrophils to bind pathogens during inflammation. Degradation of intravascular NETs by DNASE1 and DNASE1L3 is required to prevent formation of clots that obstruct blood vessels and cause organ damage following inflammation. The chain is Deoxyribonuclease-1 (DNASE1) from Oryctolagus cuniculus (Rabbit).